The chain runs to 190 residues: UPF0301 protein DP2218 (190 aa).

It belongs to the UPF0301 (AlgH) family.

This Desulfotalea psychrophila (strain LSv54 / DSM 12343) protein is UPF0301 protein DP2218.